The following is a 349-amino-acid chain: [LysW]-L-2-aminoadipate/[LysW]-L-glutamate phosphate reductase (349 aa).

10-13 contacts NADP(+); the sequence is SGYT. C150 is an active-site residue. N316 is an NADP(+) binding site.

The protein belongs to the NAGSA dehydrogenase family. Type 1 subfamily. LysY sub-subfamily.

It is found in the cytoplasm. The enzyme catalyses [amino-group carrier protein]-C-terminal-N-(1-carboxy-5-oxopentan-1-yl)-L-glutamine + phosphate + NADP(+) = [amino-group carrier protein]-C-terminal-N-(1-carboxy-5-phosphooxy-5-oxopentan-1-yl)-L-glutamine + NADPH + H(+). It carries out the reaction [amino-group carrier protein]-C-terminal-gamma-(L-glutamyl-5-semialdehyde)-L-glutamate + phosphate + NADP(+) = [amino-group carrier protein]-C-terminal-gamma-(5-phospho-L-glutamyl)-L-glutamate + NADPH + H(+). The protein operates within amino-acid biosynthesis; L-lysine biosynthesis via AAA pathway; L-lysine from L-alpha-aminoadipate (Thermus route): step 3/5. It participates in amino-acid biosynthesis; L-arginine biosynthesis. Its function is as follows. Involved in both the arginine and lysine biosynthetic pathways. In Sulfurisphaera tokodaii (strain DSM 16993 / JCM 10545 / NBRC 100140 / 7) (Sulfolobus tokodaii), this protein is [LysW]-L-2-aminoadipate/[LysW]-L-glutamate phosphate reductase.